The chain runs to 153 residues: Small ribosomal subunit protein uS12m (153 aa).

The transit peptide at 1–20 (MLSRFMSNTWCTPLRQAQRL) directs the protein to the mitochondrion.

Belongs to the universal ribosomal protein uS12 family. In terms of assembly, component of the mitochondrial small ribosomal subunit (mt-SSU). Mature yeast 74S mitochondrial ribosomes consist of a small (37S) and a large (54S) subunit. The 37S small subunit contains a 15S ribosomal RNA (15S mt-rRNA) and 34 different proteins. The 54S large subunit contains a 21S rRNA (21S mt-rRNA) and 46 different proteins. uS12m forms part of the decoding center of the mt-SSU.

Its subcellular location is the mitochondrion. Its function is as follows. Component of the mitochondrial ribosome (mitoribosome), a dedicated translation machinery responsible for the synthesis of mitochondrial genome-encoded proteins, including at least some of the essential transmembrane subunits of the mitochondrial respiratory chain. The mitoribosomes are attached to the mitochondrial inner membrane and translation products are cotranslationally integrated into the membrane. uS12m is required for respiratory growth. The sequence is that of Small ribosomal subunit protein uS12m (MRPS12) from Saccharomyces cerevisiae (strain ATCC 204508 / S288c) (Baker's yeast).